The primary structure comprises 275 residues: 2,3,4,5-tetrahydropyridine-2,6-dicarboxylate N-succinyltransferase (275 aa).

2 residues coordinate substrate: Arg-104 and Asp-141.

It belongs to the transferase hexapeptide repeat family. As to quaternary structure, homotrimer.

It is found in the cytoplasm. The enzyme catalyses (S)-2,3,4,5-tetrahydrodipicolinate + succinyl-CoA + H2O = (S)-2-succinylamino-6-oxoheptanedioate + CoA. It participates in amino-acid biosynthesis; L-lysine biosynthesis via DAP pathway; LL-2,6-diaminopimelate from (S)-tetrahydrodipicolinate (succinylase route): step 1/3. The sequence is that of 2,3,4,5-tetrahydropyridine-2,6-dicarboxylate N-succinyltransferase from Haemophilus influenzae (strain PittEE).